Here is a 442-residue protein sequence, read N- to C-terminus: tRNA-2-methylthio-N(6)-dimethylallyladenosine synthase (442 aa).

Residues 6–122 enclose the MTTase N-terminal domain; it reads RKFYIHTFGC…LPVLIAEAGK (117 aa). Residues cysteine 15, cysteine 51, cysteine 85, cysteine 157, cysteine 161, and cysteine 164 each contribute to the [4Fe-4S] cluster site. Residues 143–373 enclose the Radical SAM core domain; that stretch reads RTQSLTAFVP…IDLQNGISAE (231 aa). The TRAM domain occupies 376-439; the sequence is RLAIGSVVEV…SATLIGRAAE (64 aa).

The protein belongs to the methylthiotransferase family. MiaB subfamily. In terms of assembly, monomer. Requires [4Fe-4S] cluster as cofactor.

It is found in the cytoplasm. The catalysed reaction is N(6)-dimethylallyladenosine(37) in tRNA + (sulfur carrier)-SH + AH2 + 2 S-adenosyl-L-methionine = 2-methylsulfanyl-N(6)-dimethylallyladenosine(37) in tRNA + (sulfur carrier)-H + 5'-deoxyadenosine + L-methionine + A + S-adenosyl-L-homocysteine + 2 H(+). In terms of biological role, catalyzes the methylthiolation of N6-(dimethylallyl)adenosine (i(6)A), leading to the formation of 2-methylthio-N6-(dimethylallyl)adenosine (ms(2)i(6)A) at position 37 in tRNAs that read codons beginning with uridine. The polypeptide is tRNA-2-methylthio-N(6)-dimethylallyladenosine synthase (Chlorobium limicola (strain DSM 245 / NBRC 103803 / 6330)).